The sequence spans 332 residues: Eukaryotic translation initiation factor 3 subunit H (332 aa).

In terms of domain architecture, MPN spans 18 to 153; that stretch reads VQVDGLTVLK…LKAFRLSDEM (136 aa). Residues 251 to 285 are disordered; the sequence is QQQKENYLQRRQQENQSRIQRGEDPLPDEDLSKMF.

This sequence belongs to the eIF-3 subunit H family. In terms of assembly, component of the eukaryotic translation initiation factor 3 (eIF-3) complex.

The protein resides in the cytoplasm. In terms of biological role, component of the eukaryotic translation initiation factor 3 (eIF-3) complex, which is involved in protein synthesis of a specialized repertoire of mRNAs and, together with other initiation factors, stimulates binding of mRNA and methionyl-tRNAi to the 40S ribosome. The eIF-3 complex specifically targets and initiates translation of a subset of mRNAs involved in cell proliferation. The polypeptide is Eukaryotic translation initiation factor 3 subunit H (Nematostella vectensis (Starlet sea anemone)).